A 380-amino-acid polypeptide reads, in one-letter code: Cytochrome b (380 aa).

Helical transmembrane passes span 34 to 54, 78 to 99, 114 to 134, and 179 to 199; these read FGSL…LLAA, WLIR…YLHI, WNTG…GYVL, and FFTL…IHLT. Residues His-84 and His-98 each coordinate heme b. Heme b contacts are provided by His-183 and His-197. His-202 serves as a coordination point for a ubiquinone. A run of 4 helical transmembrane segments spans residues 227–247, 289–309, 321–341, and 348–368; these read LKDI…ALFS, LGGV…PLLH, FSQL…WVGS, and FIII…ILFP.

Belongs to the cytochrome b family. The cytochrome bc1 complex contains 11 subunits: 3 respiratory subunits (MT-CYB, CYC1 and UQCRFS1), 2 core proteins (UQCRC1 and UQCRC2) and 6 low-molecular weight proteins (UQCRH/QCR6, UQCRB/QCR7, UQCRQ/QCR8, UQCR10/QCR9, UQCR11/QCR10 and a cleavage product of UQCRFS1). This cytochrome bc1 complex then forms a dimer. It depends on heme b as a cofactor.

The protein localises to the mitochondrion inner membrane. Its function is as follows. Component of the ubiquinol-cytochrome c reductase complex (complex III or cytochrome b-c1 complex) that is part of the mitochondrial respiratory chain. The b-c1 complex mediates electron transfer from ubiquinol to cytochrome c. Contributes to the generation of a proton gradient across the mitochondrial membrane that is then used for ATP synthesis. The chain is Cytochrome b (MT-CYB) from Antigone vipio (White-naped crane).